A 192-amino-acid polypeptide reads, in one-letter code: Holliday junction branch migration complex subunit RuvA (192 aa).

A domain I region spans residues 1–61; that stretch reads MFEYLKGIVA…DTGITLYGFL (61 aa). A domain II region spans residues 62–137; the sequence is SLEDKELFLK…KLGDYVKKSA (76 aa). The segment at 137–140 is flexible linker; the sequence is AVAT. Residues 141-192 are domain III; that stretch reads DLTPSLQDALLALVALGYTQKEVDRITPKLAKLPENTADGYIKEALALLLKK.

This sequence belongs to the RuvA family. In terms of assembly, homotetramer. Forms an RuvA(8)-RuvB(12)-Holliday junction (HJ) complex. HJ DNA is sandwiched between 2 RuvA tetramers; dsDNA enters through RuvA and exits via RuvB. An RuvB hexamer assembles on each DNA strand where it exits the tetramer. Each RuvB hexamer is contacted by two RuvA subunits (via domain III) on 2 adjacent RuvB subunits; this complex drives branch migration. In the full resolvosome a probable DNA-RuvA(4)-RuvB(12)-RuvC(2) complex forms which resolves the HJ.

The protein resides in the cytoplasm. The RuvA-RuvB-RuvC complex processes Holliday junction (HJ) DNA during genetic recombination and DNA repair, while the RuvA-RuvB complex plays an important role in the rescue of blocked DNA replication forks via replication fork reversal (RFR). RuvA specifically binds to HJ cruciform DNA, conferring on it an open structure. The RuvB hexamer acts as an ATP-dependent pump, pulling dsDNA into and through the RuvAB complex. HJ branch migration allows RuvC to scan DNA until it finds its consensus sequence, where it cleaves and resolves the cruciform DNA. The protein is Holliday junction branch migration complex subunit RuvA of Lactobacillus gasseri (strain ATCC 33323 / DSM 20243 / BCRC 14619 / CIP 102991 / JCM 1131 / KCTC 3163 / NCIMB 11718 / NCTC 13722 / AM63).